Here is a 473-residue protein sequence, read N- to C-terminus: Ribosomal RNA small subunit methyltransferase F (473 aa).

S-adenosyl-L-methionine contacts are provided by residues 124-130 (ASAPGSK), glutamate 148, aspartate 175, and aspartate 193. Cysteine 246 serves as the catalytic Nucleophile.

The protein belongs to the class I-like SAM-binding methyltransferase superfamily. RsmB/NOP family.

It is found in the cytoplasm. It catalyses the reaction cytidine(1407) in 16S rRNA + S-adenosyl-L-methionine = 5-methylcytidine(1407) in 16S rRNA + S-adenosyl-L-homocysteine + H(+). Functionally, specifically methylates the cytosine at position 1407 (m5C1407) of 16S rRNA. In Aliivibrio fischeri (strain ATCC 700601 / ES114) (Vibrio fischeri), this protein is Ribosomal RNA small subunit methyltransferase F.